Consider the following 115-residue polypeptide: Tyrosine-protein phosphatase 18 (115 aa).

Residues 1 to 115 form the Tyrosine-protein phosphatase domain; it reads WLMIVEQKCR…ETGSDAPMVV (115 aa). Asp-83 is a substrate binding site.

The protein belongs to the protein-tyrosine phosphatase family.

The enzyme catalyses O-phospho-L-tyrosyl-[protein] + H2O = L-tyrosyl-[protein] + phosphate. The chain is Tyrosine-protein phosphatase 18 (STY-18) from Styela plicata (Wrinkled sea squirt).